Consider the following 264-residue polypeptide: Acid phosphatase (264 aa).

Positions 1–28 (MIKVPRFICMIALTSGILASGLSQSVSA) are cleaved as a signal peptide.

It belongs to the class A bacterial acid phosphatase family. The cofactor is Mg(2+). Zn(2+) is required as a cofactor.

It localises to the periplasm. The catalysed reaction is a phosphate monoester + H2O = an alcohol + phosphate. The protein is Acid phosphatase (phoC) of Zymomonas mobilis subsp. mobilis (strain ATCC 31821 / ZM4 / CP4).